We begin with the raw amino-acid sequence, 456 residues long: Histidine--tRNA ligase (456 aa).

It belongs to the class-II aminoacyl-tRNA synthetase family. As to quaternary structure, homodimer.

The protein localises to the cytoplasm. The enzyme catalyses tRNA(His) + L-histidine + ATP = L-histidyl-tRNA(His) + AMP + diphosphate + H(+). This is Histidine--tRNA ligase from Borrelia garinii subsp. bavariensis (strain ATCC BAA-2496 / DSM 23469 / PBi) (Borreliella bavariensis).